Consider the following 694-residue polypeptide: Elongation factor G 1 (694 aa).

One can recognise a tr-type G domain in the interval 5-280; that stretch reads SRYRNIGIFA…AVVDYLPDPT (276 aa). GTP-binding positions include 14 to 21, 78 to 82, and 132 to 135; these read AHVDAGKT, DTPGH, and NKLD.

This sequence belongs to the TRAFAC class translation factor GTPase superfamily. Classic translation factor GTPase family. EF-G/EF-2 subfamily.

Its subcellular location is the cytoplasm. In terms of biological role, catalyzes the GTP-dependent ribosomal translocation step during translation elongation. During this step, the ribosome changes from the pre-translocational (PRE) to the post-translocational (POST) state as the newly formed A-site-bound peptidyl-tRNA and P-site-bound deacylated tRNA move to the P and E sites, respectively. Catalyzes the coordinated movement of the two tRNA molecules, the mRNA and conformational changes in the ribosome. This is Elongation factor G 1 from Methylococcus capsulatus (strain ATCC 33009 / NCIMB 11132 / Bath).